The sequence spans 475 residues: Tryptophan synthase beta chain 2, chloroplastic (475 aa).

A compositionally biased stretch (polar residues) spans methionine 1 to leucine 21. A disordered region spans residues methionine 1–serine 44. The transit peptide at methionine 1–cysteine 51 directs the protein to the chloroplast. Threonine 52 is modified (N-acetylthreonine). Lysine 170 is modified (N6-(pyridoxal phosphate)lysine).

Belongs to the TrpB family. As to quaternary structure, tetramer of two alpha and two beta chains. It depends on pyridoxal 5'-phosphate as a cofactor.

The protein resides in the plastid. It localises to the chloroplast. The enzyme catalyses (1S,2R)-1-C-(indol-3-yl)glycerol 3-phosphate + L-serine = D-glyceraldehyde 3-phosphate + L-tryptophan + H2O. The protein operates within amino-acid biosynthesis; L-tryptophan biosynthesis; L-tryptophan from chorismate: step 5/5. The beta subunit is responsible for the synthesis of L-tryptophan from indole and L-serine. The sequence is that of Tryptophan synthase beta chain 2, chloroplastic (TSB2) from Arabidopsis thaliana (Mouse-ear cress).